The primary structure comprises 100 residues: Large ribosomal subunit protein bL28 (100 aa).

This sequence belongs to the bacterial ribosomal protein bL28 family.

The polypeptide is Large ribosomal subunit protein bL28 (Methylobacterium radiotolerans (strain ATCC 27329 / DSM 1819 / JCM 2831 / NBRC 15690 / NCIMB 10815 / 0-1)).